The sequence spans 311 residues: Cell division protein ZipA (311 aa).

The Periplasmic segment spans residues 1–5 (MQELR). A helical membrane pass occupies residues 6–26 (FVLIVVGALAIMALLFHGLWT). Over 27-311 (SKKEGKAKFG…QIVEFKAANA (285 aa)) the chain is Cytoplasmic. A compositionally biased stretch (basic and acidic residues) spans 32-54 (KAKFGDKPLSKLDLGESEPKESE). The disordered stretch occupies residues 32 to 60 (KAKFGDKPLSKLDLGESEPKESEMYVAPE).

It belongs to the ZipA family. As to quaternary structure, interacts with FtsZ via their C-terminal domains.

The protein resides in the cell inner membrane. Functionally, essential cell division protein that stabilizes the FtsZ protofilaments by cross-linking them and that serves as a cytoplasmic membrane anchor for the Z ring. Also required for the recruitment to the septal ring of downstream cell division proteins. This is Cell division protein ZipA from Vibrio vulnificus (strain CMCP6).